We begin with the raw amino-acid sequence, 142 residues long: MQHARKKFRVGRTSSHNRCMLANMLKSLIHYERIETTLPKAKELRRHADKMITLAKKNSLAARRIAIGRLMVRYNKLTSKEARQAKGGDTSVYNVDRLVVNKLFDELGNRFVERKGGYTRILKLQNRIGDNAQKCIIEFLAS.

It belongs to the bacterial ribosomal protein bL17 family. Part of the 50S ribosomal subunit. Contacts protein L32.

In Chlamydia pneumoniae (Chlamydophila pneumoniae), this protein is Large ribosomal subunit protein bL17.